The chain runs to 188 residues: Large ribosomal subunit protein uL6 (188 aa).

Belongs to the universal ribosomal protein uL6 family.

The protein is Large ribosomal subunit protein uL6 (RPL9) of Tetrahymena thermophila (strain SB210).